Here is a 951-residue protein sequence, read N- to C-terminus: Protein translocase subunit SecA (951 aa).

Residues Gln90, 108–112 (GEGKT), and Asp509 each bind ATP.

It belongs to the SecA family. Monomer and homodimer. Part of the essential Sec protein translocation apparatus which comprises SecA, SecYEG and auxiliary proteins SecDF. Other proteins may also be involved.

It is found in the cell inner membrane. It localises to the cellular thylakoid membrane. Its subcellular location is the cytoplasm. The enzyme catalyses ATP + H2O + cellular proteinSide 1 = ADP + phosphate + cellular proteinSide 2.. Part of the Sec protein translocase complex. Interacts with the SecYEG preprotein conducting channel. Has a central role in coupling the hydrolysis of ATP to the transfer of proteins into and across the cell membrane, serving as an ATP-driven molecular motor driving the stepwise translocation of polypeptide chains across the membrane. Its function is as follows. Probably participates in protein translocation into and across both the cytoplasmic and thylakoid membranes in cyanobacterial cells. The polypeptide is Protein translocase subunit SecA (Prochlorococcus marinus (strain MIT 9303)).